Consider the following 986-residue polypeptide: Ephrin type-A receptor 4 (986 aa).

The N-terminal stretch at 1–19 is a signal peptide; sequence MAGIFYFALFSCLFGICDA. Residues 20–547 lie on the Extracellular side of the membrane; that stretch reads VTGSRVYPAN…RIIGDGANST (528 aa). The 180-residue stretch at 30–209 folds into the Eph LBD domain; that stretch reads EVTLLDSRSV…FYKKCPLTVR (180 aa). Asn-235, Asn-340, and Asn-408 each carry an N-linked (GlcNAc...) asparagine glycan. Fibronectin type-III domains lie at 328–439 and 440–537; these read PPSA…TNQA and APSS…TVPS. The N-linked (GlcNAc...) asparagine glycan is linked to Asn-545. The chain crosses the membrane as a helical span at residues 548-569; that stretch reads VLLVSVSGSVVLVVILIAAFVI. The Cytoplasmic portion of the chain corresponds to 570 to 986; that stretch reads SRRRSKYSKA…QQMHGRMVPV (417 aa). A phosphotyrosine; by autocatalysis mark is found at Tyr-596 and Tyr-602. The 262-residue stretch at 621-882 folds into the Protein kinase domain; the sequence is IKIEKVIGVG…QIVNMLDKLI (262 aa). ATP contacts are provided by residues 627-635 and Lys-653; that span reads IGVGEFGEV. The active-site Proton acceptor is Asp-746. Phosphotyrosine; by autocatalysis is present on residues Tyr-779 and Tyr-928. One can recognise an SAM domain in the interval 911–975; sequence SAVVSVGDWL…LSSVQAMRTQ (65 aa). Residues 984 to 986 carry the PDZ-binding motif; that stretch reads VPV.

It belongs to the protein kinase superfamily. Tyr protein kinase family. Ephrin receptor subfamily. As to quaternary structure, heterotetramer upon binding of the ligand. The heterotetramer is composed of an ephrin dimer and a receptor dimer. Oligomerization is probably required to induce biological responses. Interacts (phosphorylated at position Tyr-602) with FYN. Interacts with CDK5, CDK5R1 and NGEF; upon activation by EFNA1 induces NGEF phosphorylation by the kinase CDK5. Interacts with CHN1; effector of EPHA4 in axon guidance linking EPHA4 activation to RAC1 regulation. Interacts (via PDZ motif) with SIPA1L1 (via PDZ domain); controls neuronal morphology through regulation of the RAP1 (RAP1A or RAP1B) and RAP2 (RAP2A, RAP2B or RAP2C) GTPases. Forms a ternary complex composed of ADAM10, CADH1 and EPHA4; within the complex, CADH1 is cleaved by ADAM10 which disrupts adherens junctions. As to expression, ubiquitous.

Its subcellular location is the cell membrane. The protein localises to the cell projection. It localises to the axon. The protein resides in the dendrite. It is found in the postsynaptic density membrane. Its subcellular location is the early endosome. The protein localises to the cell junction. It localises to the adherens junction. It carries out the reaction L-tyrosyl-[protein] + ATP = O-phospho-L-tyrosyl-[protein] + ADP + H(+). Its function is as follows. Receptor tyrosine kinase which binds membrane-bound ephrin family ligands residing on adjacent cells, leading to contact-dependent bidirectional signaling into neighboring cells. The signaling pathway downstream of the receptor is referred to as forward signaling while the signaling pathway downstream of the ephrin ligand is referred to as reverse signaling. Highly promiscuous, it has the unique property among Eph receptors to bind and to be physiologically activated by both GPI-anchored ephrin-A and transmembrane ephrin-B ligands including EFNA1 and EFNB3. Upon activation by ephrin ligands, modulates cell morphology and integrin-dependent cell adhesion through regulation of the Rac, Rap and Rho GTPases activity. Plays an important role in the development of the nervous system controlling different steps of axonal guidance including the establishment of the corticospinal projections. May also control the segregation of motor and sensory axons during neuromuscular circuit development. In addition to its role in axonal guidance plays a role in synaptic plasticity. Activated by EFNA1 phosphorylates CDK5 at 'Tyr-15' which in turn phosphorylates NGEF regulating RHOA and dendritic spine morphogenesis. In the nervous system, also plays a role in repair after injury preventing axonal regeneration and in angiogenesis playing a role in central nervous system vascular formation. Additionally, its promiscuity makes it available to participate in a variety of cell-cell signaling regulating for instance the development of the thymic epithelium. During development of the cochlear organ of Corti, regulates pillar cell separation by forming a ternary complex with ADAM10 and CADH1 which facilitates the cleavage of CADH1 by ADAM10 and disruption of adherens junctions. Phosphorylates CAPRIN1, promoting CAPRIN1-dependent formation of a membraneless compartment. In Homo sapiens (Human), this protein is Ephrin type-A receptor 4 (EPHA4).